The chain runs to 413 residues: Arginine biosynthesis bifunctional protein ArgJ (413 aa).

Substrate is bound by residues Thr158, Lys184, Thr195, Glu285, Asn408, and Ser413. Thr195 acts as the Nucleophile in catalysis.

This sequence belongs to the ArgJ family. Heterotetramer of two alpha and two beta chains.

It is found in the cytoplasm. The enzyme catalyses N(2)-acetyl-L-ornithine + L-glutamate = N-acetyl-L-glutamate + L-ornithine. It catalyses the reaction L-glutamate + acetyl-CoA = N-acetyl-L-glutamate + CoA + H(+). The protein operates within amino-acid biosynthesis; L-arginine biosynthesis; L-ornithine and N-acetyl-L-glutamate from L-glutamate and N(2)-acetyl-L-ornithine (cyclic): step 1/1. Its pathway is amino-acid biosynthesis; L-arginine biosynthesis; N(2)-acetyl-L-ornithine from L-glutamate: step 1/4. Catalyzes two activities which are involved in the cyclic version of arginine biosynthesis: the synthesis of N-acetylglutamate from glutamate and acetyl-CoA as the acetyl donor, and of ornithine by transacetylation between N(2)-acetylornithine and glutamate. This chain is Arginine biosynthesis bifunctional protein ArgJ, found in Rhizobium meliloti (strain 1021) (Ensifer meliloti).